Reading from the N-terminus, the 616-residue chain is uncharacterized protein (616 aa).

The protein belongs to the UbiD family.

This is an uncharacterized protein from Helicobacter pylori (strain ATCC 700392 / 26695) (Campylobacter pylori).